The chain runs to 563 residues: Beta-catenin-like protein 1 (563 aa).

Residue Met-1 is modified to N-acetylmethionine. The segment at 1-49 (MDVGELLSYQPNRGTKRPRDDEEEEQKMRRKQTGTRERGRYREEEMTVV) is disordered. Residues 16–33 (KRPRDDEEEEQKMRRKQT) carry the Nuclear localization signal motif. Positions 34–45 (GTRERGRYREEE) are enriched in basic and acidic residues. 2 HEAT repeats span residues 79–129 (ESSV…VVAT) and 134–176 (YHLL…TLHE). Lys-91 is modified (N6-acetyllysine). A Nuclear export signal (NES) motif is present at residues 130-140 (MPDLYHLLVEL). ARM repeat units follow at residues 178 to 228 (EEGA…MAEF), 229 to 273 (RPEM…LQDN), 274 to 323 (DENR…CLML), 325 to 363 (SNRERFLKGEGLQLMNLMLREKKISRSSALKVLDHAMIG), and 364 to 417 (PEGT…LLRN). Ser-389 carries the phosphoserine modification. Residues 476 to 540 (DTEEEFYLRR…HIIKEYAENI (65 aa)) are a coiled coil. Ser-545 is subject to Phosphoserine.

As to quaternary structure, component of the PRP19-CDC5L splicing complex composed of a core complex comprising a homotetramer of PRPF19, CDC5L, PLRG1 and BCAS2, and at least three less stably associated proteins CTNNBL1, CWC15 and HSPA8. Interacts directly with CWC15 and CDC5L in the complex. Interacts with AICDA; the interaction is important for the antibody diversification activity of AICDA. Interacts with PRPF31 (via its NLS). Interacts (via its N-terminal NLS) with KPNA1 and KPNA2. In terms of tissue distribution, widely expressed with highest levels in skeletal muscle, placenta, heart, spleen, testis and thyroid.

It is found in the nucleus. Its subcellular location is the cytoplasm. In terms of biological role, component of the PRP19-CDC5L complex that forms an integral part of the spliceosome and is required for activating pre-mRNA splicing. Participates in AID/AICDA-mediated somatic hypermutation (SHM) and class-switch recombination (CSR), 2 processes resulting in the production of high-affinity, mutated isotype-switched antibodies. This chain is Beta-catenin-like protein 1 (CTNNBL1), found in Homo sapiens (Human).